The sequence spans 251 residues: MAAHLLIVDALNLIRRIHAVQGSPCVETCQHALDQLIIHSQPTHAVAVFDDDARSSGWRHQRLPDYKAGRPPMPDDLHNEMPALRAAFEQRGVRCWASDGNEADDLAATLALKVTEAGHQATIVSTDKGYCQLLSPGLRIRDYFQKRWLDAPFIEKEFGVLPRQLPDYWGLAGISSSKVPGVAGIGPKSATQLLIQFQNLEGIYAHPDEVPEKWRKKLETHKEMAFLCRDIARLQTDLHIDGNLQQLRLAR.

Asp-104 is a Mg(2+) binding site. Residues 160–249 (VLPRQLPDYW…IDGNLQQLRL (90 aa)) form the 5'-3' exonuclease domain. Positions 171, 172, 180, 182, and 185 each coordinate K(+). Residues 184–189 (GIGPKS) form an interaction with DNA region.

It belongs to the Xni family. The cofactor is Mg(2+). K(+) is required as a cofactor.

In terms of biological role, has flap endonuclease activity. During DNA replication, flap endonucleases cleave the 5'-overhanging flap structure that is generated by displacement synthesis when DNA polymerase encounters the 5'-end of a downstream Okazaki fragment. This chain is Flap endonuclease Xni, found in Salmonella newport (strain SL254).